We begin with the raw amino-acid sequence, 324 residues long: HTH-type transcriptional regulator GlxA (324 aa).

The HTH araC/xylS-type domain maps to 223 to 321; it reads LAVLEKMETA…SQTPGSLRRR (99 aa). 2 DNA-binding regions (H-T-H motif) span residues 240 to 261 and 288 to 311; these read TAMA…REHR and IPEI…KRLF.

This Rhizobium meliloti (strain 1021) (Ensifer meliloti) protein is HTH-type transcriptional regulator GlxA (glxA).